Here is a 511-residue protein sequence, read N- to C-terminus: Putative polyol transporter 1 (511 aa).

12 consecutive transmembrane segments (helical) span residues 27 to 47 (FACAILASMTSIILGYDIGVM), 63 to 83 (VQLEILMGILNIYSLVGSGAA), 94 to 114 (YTIVLAGAFFFCGALLMGFAT), 124 to 144 (FVAGIGVGYAMMIAPVYTAEV), 151 to 171 (GFLTSFPEIFINIGILLGYVS), 186 to 206 (FMLGVGAVPSVFLAIGVLAMP), 284 to 304 (ILIACLGIHFAQQASGIDAVV), 324 to 344 (LATVAVGVVKTLFIVVGTCVV), 351 to 371 (ALLLTSMGGMFLSLTALGTSL), 384 to 404 (WAIGLAVTTVMTFVATFSIGA), 424 to 444 (GASLGVMLNRLMSGIIGMTFL), and 454 to 474 (GAFLLFAGVAAAAWVFFFTFL).

The protein belongs to the major facilitator superfamily. Sugar transporter (TC 2.A.1.1) family.

It localises to the membrane. Its function is as follows. Plasma membrane sugar-proton symporter. The sequence is that of Putative polyol transporter 1 (PLT1) from Arabidopsis thaliana (Mouse-ear cress).